The chain runs to 130 residues: MSRQNTIADAMSALKNAGDCGKPECILEPSSKLLGAMLRIMQDAGYIGSFDMIDDGRGGQFRVHLSGRINKCGAITPRYSVGLDELEYWETRYLPGKNFGLLILSTSRGVLTHNQARQNGIGGELLGFVY.

The protein belongs to the universal ribosomal protein uS8 family. Part of the 30S ribosomal subunit.

Functionally, one of the primary rRNA binding proteins, it binds directly to 16S rRNA central domain where it helps coordinate assembly of the platform of the 30S subunit. The protein is Small ribosomal subunit protein uS8 of Methanosphaerula palustris (strain ATCC BAA-1556 / DSM 19958 / E1-9c).